The following is a 448-amino-acid chain: U-box domain-containing protein 30 (448 aa).

The U-box domain occupies 63-137 (DIPSVFICPI…YTWFSQKYVL (75 aa)). ARM repeat units lie at residues 179–219 (LMAR…SLDL) and 221–260 (SDSK…GLVE).

It carries out the reaction S-ubiquitinyl-[E2 ubiquitin-conjugating enzyme]-L-cysteine + [acceptor protein]-L-lysine = [E2 ubiquitin-conjugating enzyme]-L-cysteine + N(6)-ubiquitinyl-[acceptor protein]-L-lysine.. It functions in the pathway protein modification; protein ubiquitination. In terms of biological role, functions as an E3 ubiquitin ligase. This is U-box domain-containing protein 30 (PUB30) from Arabidopsis thaliana (Mouse-ear cress).